Consider the following 300-residue polypeptide: Bifunctional protein FolD 2 (300 aa).

NADP(+) is bound by residues Gly166 to Ser168, Ser191, and Ile232.

This sequence belongs to the tetrahydrofolate dehydrogenase/cyclohydrolase family. As to quaternary structure, homodimer.

It catalyses the reaction (6R)-5,10-methylene-5,6,7,8-tetrahydrofolate + NADP(+) = (6R)-5,10-methenyltetrahydrofolate + NADPH. The catalysed reaction is (6R)-5,10-methenyltetrahydrofolate + H2O = (6R)-10-formyltetrahydrofolate + H(+). It participates in one-carbon metabolism; tetrahydrofolate interconversion. In terms of biological role, catalyzes the oxidation of 5,10-methylenetetrahydrofolate to 5,10-methenyltetrahydrofolate and then the hydrolysis of 5,10-methenyltetrahydrofolate to 10-formyltetrahydrofolate. The protein is Bifunctional protein FolD 2 of Roseobacter denitrificans (strain ATCC 33942 / OCh 114) (Erythrobacter sp. (strain OCh 114)).